We begin with the raw amino-acid sequence, 198 residues long: Protein C4 (198 aa).

Residues 1-36 (MFNPRHPGGEFFGRKHHRRHAPDGRSSSSSSSSSEC) are disordered.

This is Protein C4 (C4) from Giardia intestinalis (Giardia lamblia).